The sequence spans 204 residues: Lysozyme G (204 aa).

The signal sequence occupies residues 1-19 (MHLMLVLLGLAALLGTSQS). Intrachain disulfides connect C23–C79 and C37–C48. Residues E92 and D105 contribute to the active site.

This sequence belongs to the glycosyl hydrolase 23 family.

The protein resides in the secreted. It carries out the reaction Hydrolysis of (1-&gt;4)-beta-linkages between N-acetylmuramic acid and N-acetyl-D-glucosamine residues in a peptidoglycan and between N-acetyl-D-glucosamine residues in chitodextrins.. Has bacteriolytic activity against M.luteus. In Dromaius novaehollandiae (Emu), this protein is Lysozyme G.